We begin with the raw amino-acid sequence, 209 residues long: CAAX box protein 1 (209 aa).

The disordered stretch occupies residues 182–209 (TAGRPPRDLSPSARPISSPPPETSCVLA). Cys-206 carries the cysteine methyl ester modification. Cys-206 carries S-farnesyl cysteine lipidation. Positions 207–209 (VLA) are cleaved as a propeptide — removed in mature form.

Ubiquitous.

It localises to the cell membrane. This is CAAX box protein 1 from Homo sapiens (Human).